A 313-amino-acid chain; its full sequence is Lactamase-like protein ptaB (313 aa).

The Zn(2+) site is built by histidine 104, histidine 106, aspartate 108, and histidine 109. Aspartate 108 functions as the Proton donor/acceptor in the catalytic mechanism.

It belongs to the metallo-beta-lactamase superfamily. Zn(2+) is required as a cofactor.

It catalyses the reaction atrochrysone carboxyl-[ACP] + H2O = atrochrysone carboxylate + holo-[ACP] + H(+). The protein operates within secondary metabolite biosynthesis. Its function is as follows. Lactamase-like protein; part of the gene cluster that mediates the biosynthesis of pestheic acid, a diphenyl ether which is a biosynthetic precursor of the unique chloropupukeananes. The biosynthesis initiates from condensation of acetate and malonate units catalyzed by the non-reducing PKS ptaA. As the ptaA protein is TE/CLC domain-deficient, hydrolysis and Claisen cyclization of the polyketide could be catalyzed by ptaB containing a beta-lactamase domain. The ptaB protein might hydrolyze the thioester bond between the ACP of ptaA and the intermediate to release atrochrysone carboxylic acid, which is spontaneously dehydrated to form endocrocin anthrone. Endocrocin anthrone is then converted to endocrocin, catalyzed by the anthrone oxygenase ptaC. Spontaneous decarboxylation of endocrocin occurs to generate emodin. An O-methyltransferase (ptaH or ptaI) could methylate emodin to form physcion. PtaJ could then catalyze the oxidative cleavage of physcion, and rotation of the intermediate could then afford desmethylisosulochrin. PtaF, a putative NADH-dependent oxidoreductase, might also participate in the oxidative cleavage step. Desmethylisosulochrin is then transformed by another O-methyltransferase (ptaH or ptaI) to form isosulochrin. Chlorination of isosulochrin by ptaM in the cyclohexadienone B ring then produces chloroisosulochrin. PtaE is responsible for the oxidative coupling reactions of both benzophenones isosulochrin and chloroisosulochrin to RES-1214-1 and pestheic acid respectively, regardless of chlorination. The sequence is that of Lactamase-like protein ptaB from Pestalotiopsis fici (strain W106-1 / CGMCC3.15140).